The following is a 494-amino-acid chain: Cytochrome c-552 (494 aa).

The N-terminal stretch at 1-31 (MEKKLKSWQGWLLFGGTMVVVFVLGMIAASV) is a signal peptide. His116 serves as a coordination point for heme c. Residues Cys144, Cys147, and Lys148 each contribute to the heme site. 6 residues coordinate heme c: Cys182, Cys185, His186, Cys224, Cys227, and His228. Ca(2+) is bound by residues Glu230, Tyr231, Lys276, and Gln278. Tyr231 provides a ligand contact to substrate. His279 is a substrate binding site. Heme c is bound by residues His290, Cys297, Cys300, His301, His315, Cys328, Cys331, His332, and His407.

The protein belongs to the cytochrome c-552 family. Ca(2+) is required as a cofactor. Heme c serves as cofactor.

The protein resides in the periplasm. The enzyme catalyses 6 Fe(III)-[cytochrome c] + NH4(+) + 2 H2O = 6 Fe(II)-[cytochrome c] + nitrite + 8 H(+). Its pathway is nitrogen metabolism; nitrate reduction (assimilation). Functionally, catalyzes the reduction of nitrite to ammonia, consuming six electrons in the process. The sequence is that of Cytochrome c-552 from Parabacteroides distasonis (strain ATCC 8503 / DSM 20701 / CIP 104284 / JCM 5825 / NCTC 11152).